A 143-amino-acid polypeptide reads, in one-letter code: ATP synthase subunit b' (143 aa).

Residues 6–26 form a helical membrane-spanning segment; that stretch reads ATLPLMALQFVVLAFLLNAIF.

The protein belongs to the ATPase B chain family. F-type ATPases have 2 components, F(1) - the catalytic core - and F(0) - the membrane proton channel. F(1) has five subunits: alpha(3), beta(3), gamma(1), delta(1), epsilon(1). F(0) has four main subunits: a(1), b(1), b'(1) and c(10-14). The alpha and beta chains form an alternating ring which encloses part of the gamma chain. F(1) is attached to F(0) by a central stalk formed by the gamma and epsilon chains, while a peripheral stalk is formed by the delta, b and b' chains.

Its subcellular location is the cellular thylakoid membrane. F(1)F(0) ATP synthase produces ATP from ADP in the presence of a proton or sodium gradient. F-type ATPases consist of two structural domains, F(1) containing the extramembraneous catalytic core and F(0) containing the membrane proton channel, linked together by a central stalk and a peripheral stalk. During catalysis, ATP synthesis in the catalytic domain of F(1) is coupled via a rotary mechanism of the central stalk subunits to proton translocation. Functionally, component of the F(0) channel, it forms part of the peripheral stalk, linking F(1) to F(0). The b'-subunit is a diverged and duplicated form of b found in plants and photosynthetic bacteria. This Synechocystis sp. (strain ATCC 27184 / PCC 6803 / Kazusa) protein is ATP synthase subunit b'.